A 166-amino-acid chain; its full sequence is Peptidoglycan-associated lipoprotein (166 aa).

Residues 1–21 form the signal peptide; it reads MEMLKFGKFAALALAMAVAVG. Cys-22 carries the N-palmitoyl cysteine lipid modification. Cys-22 carries S-diacylglycerol cysteine lipidation. An OmpA-like domain is found at 54 to 166; the sequence is SEEAALRAIT…AQNRRVELRK (113 aa). The segment at 147–166 is disordered; that stretch reads VATGNDEQSWAQNRRVELRK.

Belongs to the Pal lipoprotein family. The Tol-Pal system is composed of five core proteins: the inner membrane proteins TolA, TolQ and TolR, the periplasmic protein TolB and the outer membrane protein Pal. They form a network linking the inner and outer membranes and the peptidoglycan layer.

It is found in the cell outer membrane. In terms of biological role, part of the Tol-Pal system, which plays a role in outer membrane invagination during cell division and is important for maintaining outer membrane integrity. The chain is Peptidoglycan-associated lipoprotein from Pseudomonas putida (Arthrobacter siderocapsulatus).